A 326-amino-acid polypeptide reads, in one-letter code: Tagatose 1,6-diphosphate aldolase 2 (326 aa).

This sequence belongs to the aldolase LacD family.

It catalyses the reaction D-tagatofuranose 1,6-bisphosphate = D-glyceraldehyde 3-phosphate + dihydroxyacetone phosphate. The protein operates within carbohydrate metabolism; D-tagatose 6-phosphate degradation; D-glyceraldehyde 3-phosphate and glycerone phosphate from D-tagatose 6-phosphate: step 2/2. The polypeptide is Tagatose 1,6-diphosphate aldolase 2 (lacD2) (Streptococcus agalactiae serotype III (strain NEM316)).